Consider the following 327-residue polypeptide: Glycerol-3-phosphate dehydrogenase [NAD(P)+] (327 aa).

Residues F13, R34, and K107 each coordinate NADPH. Residues K107 and G135 each contribute to the sn-glycerol 3-phosphate site. Residue A139 coordinates NADPH. Sn-glycerol 3-phosphate contacts are provided by K190, D243, S253, R254, and N255. Residue K190 is the Proton acceptor of the active site. Position 254 (R254) interacts with NADPH. V276 and E277 together coordinate NADPH.

The protein belongs to the NAD-dependent glycerol-3-phosphate dehydrogenase family.

Its subcellular location is the cytoplasm. It carries out the reaction sn-glycerol 3-phosphate + NAD(+) = dihydroxyacetone phosphate + NADH + H(+). The enzyme catalyses sn-glycerol 3-phosphate + NADP(+) = dihydroxyacetone phosphate + NADPH + H(+). It functions in the pathway membrane lipid metabolism; glycerophospholipid metabolism. In terms of biological role, catalyzes the reduction of the glycolytic intermediate dihydroxyacetone phosphate (DHAP) to sn-glycerol 3-phosphate (G3P), the key precursor for phospholipid synthesis. The polypeptide is Glycerol-3-phosphate dehydrogenase [NAD(P)+] (Rhizobium etli (strain CIAT 652)).